Reading from the N-terminus, the 266-residue chain is Elongator complex protein 6 (266 aa).

This sequence belongs to the ELP6 family. As to quaternary structure, component of the elongator complex which consists of ELP1, ELP2, ELP3, ELP4, ELP5 and ELP6.

It localises to the cytoplasm. The protein localises to the nucleus. Its pathway is tRNA modification; 5-methoxycarbonylmethyl-2-thiouridine-tRNA biosynthesis. Functionally, component of the elongator complex which is required for multiple tRNA modifications, including mcm5U (5-methoxycarbonylmethyl uridine), mcm5s2U (5-methoxycarbonylmethyl-2-thiouridine), and ncm5U (5-carbamoylmethyl uridine). The elongator complex catalyzes formation of carboxymethyluridine in the wobble base at position 34 in tRNAs. Involved in cell migration. The chain is Elongator complex protein 6 from Homo sapiens (Human).